A 594-amino-acid chain; its full sequence is Sucrose transport protein SUC3 (594 aa).

The residue at position 2 (S2) is an N-acetylserine. The Cytoplasmic portion of the chain corresponds to 2-58; it reads SDSVSISVPYRNLRKEIELETVTKHRQNESGSSSFSESASPSNHSDSADGESVSKNC. The tract at residues 23–50 is disordered; sequence VTKHRQNESGSSSFSESASPSNHSDSAD. Residues 31–46 are compositionally biased toward low complexity; it reads SGSSSFSESASPSNHS. Residues 59 to 79 form a helical membrane-spanning segment; sequence SLVTLVLSCTVAAGVQFGWAL. The Extracellular portion of the chain corresponds to 80-98; the sequence is QLSLLTPYIQTLGISHAFS. A helical membrane pass occupies residues 99–119; it reads SFIWLCGPITGLVVQPFVGIW. Over 120–131 the chain is Cytoplasmic; that stretch reads SDKCTSKYGRRR. The helical transmembrane segment at 132-152 threads the bilayer; it reads PFILVGSFMISIAVIIIGFSA. The Extracellular portion of the chain corresponds to 153-174; the sequence is DIGYLLGDSKEHCSTFKGTRTR. A helical membrane pass occupies residues 175–195; it reads AAVVFIIGFWLLDLANNTVQG. At 196–214 the chain is on the cytoplasmic side; it reads PARALLADLSGPDQRNTAN. Residues 215–235 traverse the membrane as a helical segment; sequence AVFCLWMAIGNILGFSAGASG. The Extracellular segment spans residues 236 to 257; the sequence is KWQEWFPFLTSRACCAACGNLK. Residues 258–278 traverse the membrane as a helical segment; the sequence is AAFLLAVVFLTICTLVTIYFA. The Cytoplasmic segment spans residues 279–365; it reads KEIPFTSNKP…LTSLRHLPPA (87 aa). A helical membrane pass occupies residues 366–386; it reads MHSVLIVMALTWLSWFPFFLF. The Extracellular segment spans residues 387–417; it reads DTDWMGREVYHGDPTGDSLHMELYDQGVREG. A helical membrane pass occupies residues 418-438; sequence ALGLLLNSVVLGISSFLIEPM. The Cytoplasmic segment spans residues 439 to 445; it reads CQRMGAR. The helical transmembrane segment at 446-466 threads the bilayer; the sequence is VVWALSNFTVFACMAGTAVIS. Residues 467 to 489 lie on the Extracellular side of the membrane; that stretch reads LMSLSDDKNGIEYIMRGNETTRT. N-linked (GlcNAc...) asparagine glycosylation is present at N484. A helical transmembrane segment spans residues 490–510; it reads AAVIVFALLGFPLAITYSVPF. At 511-525 the chain is on the cytoplasmic side; sequence SVTAEVTADSGGGQG. Residues 526 to 546 form a helical membrane-spanning segment; the sequence is LAIGVLNLAIVIPQMIVSLGA. Over 547-555 the chain is Extracellular; sequence GPWDQLFGG. The chain crosses the membrane as a helical span at residues 556-576; sequence GNLPAFVLASVAAFAAGVIAL. Residues 577–594 are Cytoplasmic-facing; that stretch reads QRLPTLSSSFKSTGFHIG.

Belongs to the glycoside-pentoside-hexuronide (GPH) cation symporter transporter (TC 2.A.2.4) family. Homodimer. Interacts with SUC2 and SUC4. Mostly localized in parenchymatic cells next to vascular tissues (at protein level). Present in stipules, trichomes, hydathodes and guard cells of source leaves, as well as in lateral root tips and flowers.

It is found in the cell membrane. The catalysed reaction is sucrose(out) + H(+)(out) = sucrose(in) + H(+)(in). It functions in the pathway glycan biosynthesis; sucrose metabolism. With respect to regulation, inhibited by protonophores (e.g. dinitrophenol and carbonyl cyanide m-chlorophenyl-hydrazone (CCCP)) and SH group inhibitors (e.g. p-chloromercuribenzene sulphonic acid (PCMBS)). Its function is as follows. Responsible for the transport of sucrose into the cell, with the concomitant uptake of protons (symport system). Can also transport maltose at a lesser rate. May also transport biotin. Probably involved in carpel maturation that leads to pod shatter and seed dispersal. In Arabidopsis thaliana (Mouse-ear cress), this protein is Sucrose transport protein SUC3.